We begin with the raw amino-acid sequence, 249 residues long: Methionine aminopeptidase (249 aa).

Histidine 77 lines the substrate pocket. A divalent metal cation is bound by residues aspartate 94, aspartate 105, and histidine 168. Histidine 175 is a substrate binding site. Residues glutamate 201 and glutamate 232 each contribute to the a divalent metal cation site.

The protein belongs to the peptidase M24A family. Methionine aminopeptidase type 1 subfamily. As to quaternary structure, monomer. Co(2+) serves as cofactor. Requires Zn(2+) as cofactor. It depends on Mn(2+) as a cofactor. The cofactor is Fe(2+).

It catalyses the reaction Release of N-terminal amino acids, preferentially methionine, from peptides and arylamides.. Removes the N-terminal methionine from nascent proteins. The N-terminal methionine is often cleaved when the second residue in the primary sequence is small and uncharged (Met-Ala-, Cys, Gly, Pro, Ser, Thr, or Val). Requires deformylation of the N(alpha)-formylated initiator methionine before it can be hydrolyzed. The sequence is that of Methionine aminopeptidase from Clostridium perfringens (strain 13 / Type A).